Consider the following 175-residue polypeptide: MLTSGNILLAGSLLSPEPGLIFWTTITFVLVLIILKKIAWGPIISALEEREKGIQSSIDRAHGAKEESEAILRQNRELLAKADAEADRVIREGREYAEKIRAEITEKAHQESQKMISAAKEEIEQEKRRALAELRNEVADLAVRGAEKIIRGVLDADVQKKVVDSMIQDLSTNRN.

Residues 20-40 (LIFWTTITFVLVLIILKKIAW) form a helical membrane-spanning segment.

The protein belongs to the ATPase B chain family. As to quaternary structure, F-type ATPases have 2 components, F(1) - the catalytic core - and F(0) - the membrane proton channel. F(1) has five subunits: alpha(3), beta(3), gamma(1), delta(1), epsilon(1). F(0) has four main subunits: a(1), b(2) and c(10-14). The alpha and beta chains form an alternating ring which encloses part of the gamma chain. F(1) is attached to F(0) by a central stalk formed by the gamma and epsilon chains, while a peripheral stalk is formed by the delta and b chains.

Its subcellular location is the cell inner membrane. In terms of biological role, f(1)F(0) ATP synthase produces ATP from ADP in the presence of a proton or sodium gradient. F-type ATPases consist of two structural domains, F(1) containing the extramembraneous catalytic core and F(0) containing the membrane proton channel, linked together by a central stalk and a peripheral stalk. During catalysis, ATP synthesis in the catalytic domain of F(1) is coupled via a rotary mechanism of the central stalk subunits to proton translocation. Functionally, component of the F(0) channel, it forms part of the peripheral stalk, linking F(1) to F(0). The chain is ATP synthase subunit b 2 from Chlorobium luteolum (strain DSM 273 / BCRC 81028 / 2530) (Pelodictyon luteolum).